A 276-amino-acid chain; its full sequence is 4-hydroxy-tetrahydrodipicolinate reductase (276 aa).

16–21 (GALGKM) serves as a coordination point for NAD(+). K44 is a binding site for NADP(+). NAD(+) is bound by residues 109–111 (GTT) and 135–138 (APNF). Residue H165 is the Proton donor/acceptor of the active site. Residue H166 coordinates (S)-2,3,4,5-tetrahydrodipicolinate. Catalysis depends on K169, which acts as the Proton donor. (S)-2,3,4,5-tetrahydrodipicolinate is bound at residue 175 to 176 (GT).

It belongs to the DapB family.

It localises to the cytoplasm. The enzyme catalyses (S)-2,3,4,5-tetrahydrodipicolinate + NAD(+) + H2O = (2S,4S)-4-hydroxy-2,3,4,5-tetrahydrodipicolinate + NADH + H(+). The catalysed reaction is (S)-2,3,4,5-tetrahydrodipicolinate + NADP(+) + H2O = (2S,4S)-4-hydroxy-2,3,4,5-tetrahydrodipicolinate + NADPH + H(+). It functions in the pathway amino-acid biosynthesis; L-lysine biosynthesis via DAP pathway; (S)-tetrahydrodipicolinate from L-aspartate: step 4/4. Its function is as follows. Catalyzes the conversion of 4-hydroxy-tetrahydrodipicolinate (HTPA) to tetrahydrodipicolinate. The protein is 4-hydroxy-tetrahydrodipicolinate reductase of Thermosynechococcus vestitus (strain NIES-2133 / IAM M-273 / BP-1).